Consider the following 156-residue polypeptide: Small ribosomal subunit protein uS7 (156 aa).

The protein belongs to the universal ribosomal protein uS7 family. Part of the 30S ribosomal subunit. Contacts proteins S9 and S11.

One of the primary rRNA binding proteins, it binds directly to 16S rRNA where it nucleates assembly of the head domain of the 30S subunit. Is located at the subunit interface close to the decoding center, probably blocks exit of the E-site tRNA. In Limosilactobacillus fermentum (strain NBRC 3956 / LMG 18251) (Lactobacillus fermentum), this protein is Small ribosomal subunit protein uS7.